Reading from the N-terminus, the 214-residue chain is FMN-dependent NADH:quinone oxidoreductase 1 (214 aa).

FMN contacts are provided by residues 17 to 19 and 144 to 147; these read SWS and SAGG.

Belongs to the azoreductase type 1 family. In terms of assembly, homodimer. Requires FMN as cofactor.

It carries out the reaction 2 a quinone + NADH + H(+) = 2 a 1,4-benzosemiquinone + NAD(+). It catalyses the reaction N,N-dimethyl-1,4-phenylenediamine + anthranilate + 2 NAD(+) = 2-(4-dimethylaminophenyl)diazenylbenzoate + 2 NADH + 2 H(+). In terms of biological role, quinone reductase that provides resistance to thiol-specific stress caused by electrophilic quinones. Its function is as follows. Also exhibits azoreductase activity. Catalyzes the reductive cleavage of the azo bond in aromatic azo compounds to the corresponding amines. This is FMN-dependent NADH:quinone oxidoreductase 1 from Lactococcus lactis subsp. lactis (strain IL1403) (Streptococcus lactis).